A 385-amino-acid polypeptide reads, in one-letter code: Cell division protein FtsZ (385 aa).

GTP contacts are provided by residues 37 to 41 (GGGSN), 125 to 127 (GTG), glutamate 156, lysine 160, and aspartate 204.

It belongs to the FtsZ family. Homodimer. Polymerizes to form a dynamic ring structure in a strictly GTP-dependent manner. Interacts directly with several other division proteins.

It localises to the cytoplasm. Essential cell division protein that forms a contractile ring structure (Z ring) at the future cell division site. The regulation of the ring assembly controls the timing and the location of cell division. One of the functions of the FtsZ ring is to recruit other cell division proteins to the septum to produce a new cell wall between the dividing cells. Binds GTP and shows GTPase activity. The polypeptide is Cell division protein FtsZ (Helicobacter pylori (strain J99 / ATCC 700824) (Campylobacter pylori J99)).